The following is a 151-amino-acid chain: Protein InSETG-4 (151 aa).

Its subcellular location is the cytoplasm. The protein resides in the cytosol. The sequence is that of Protein InSETG-4 (InSet4-G) from Homo sapiens (Human).